The chain runs to 472 residues: Zinc finger imprinted 3 (472 aa).

Positions 8 to 80 (VTFEDVTVNF…EEEVLGSGRA (73 aa)) constitute a KRAB domain. 11 consecutive C2H2-type zinc fingers follow at residues 167 to 189 (LKCN…LRRH), 195 to 217 (FECH…QKTH), 223 to 245 (YKCE…QKMH), 251 to 273 (YQCK…EKIH), 279 to 301 (YQCN…KKVH), 307 to 329 (FQCT…QRIH), 335 to 357 (YKCS…EKIH), 363 to 385 (YECD…KKIH), 391 to 413 (YECN…QKTH), 419 to 441 (YRCS…KKTH), and 447 to 470 (YGCS…KRIH).

This sequence belongs to the krueppel C2H2-type zinc-finger protein family.

The protein localises to the nucleus. Its function is as follows. May be involved in transcriptional regulation. This is Zinc finger imprinted 3 (ZIM3) from Homo sapiens (Human).